The sequence spans 292 residues: tRNA-cytidine(32) 2-sulfurtransferase (292 aa).

The PP-loop motif motif lies at 54-59; it reads SGGKDS. Residues Cys129, Cys132, and Cys220 each contribute to the [4Fe-4S] cluster site.

The protein belongs to the TtcA family. Homodimer. Mg(2+) is required as a cofactor. It depends on [4Fe-4S] cluster as a cofactor.

It is found in the cytoplasm. The catalysed reaction is cytidine(32) in tRNA + S-sulfanyl-L-cysteinyl-[cysteine desulfurase] + AH2 + ATP = 2-thiocytidine(32) in tRNA + L-cysteinyl-[cysteine desulfurase] + A + AMP + diphosphate + H(+). It functions in the pathway tRNA modification. Functionally, catalyzes the ATP-dependent 2-thiolation of cytidine in position 32 of tRNA, to form 2-thiocytidine (s(2)C32). The sulfur atoms are provided by the cysteine/cysteine desulfurase (IscS) system. The polypeptide is tRNA-cytidine(32) 2-sulfurtransferase (Cereibacter sphaeroides (strain ATCC 17025 / ATH 2.4.3) (Rhodobacter sphaeroides)).